The following is a 436-amino-acid chain: UPF0597 protein YhaM (436 aa).

The protein belongs to the UPF0597 family.

In Salmonella heidelberg (strain SL476), this protein is UPF0597 protein YhaM.